A 170-amino-acid chain; its full sequence is Photosystem I assembly protein Ycf3 (170 aa).

TPR repeat units lie at residues 35–68 (AFTY…EIDP), 72–105 (SYIL…NPFL), and 120–153 (GEQA…TPGN).

This sequence belongs to the Ycf3 family.

The protein resides in the plastid. Its subcellular location is the chloroplast thylakoid membrane. In terms of biological role, essential for the assembly of the photosystem I (PSI) complex. May act as a chaperone-like factor to guide the assembly of the PSI subunits. The protein is Photosystem I assembly protein Ycf3 of Oryza sativa (Rice).